The sequence spans 309 residues: Dihydroorotate dehydrogenase B (NAD(+)), catalytic subunit (309 aa).

Residues S21 and 45-46 each bind FMN; that span reads KA. Substrate-binding positions include K45 and 69–73; that span reads NAIGL. FMN-binding residues include N99 and N127. N127 is a substrate binding site. C130 (nucleophile) is an active-site residue. Residues K165 and I191 each coordinate FMN. Substrate is bound at residue 192 to 193; the sequence is NT. Residues G217, 243 to 244, and 265 to 266 each bind FMN; these read GG and GT.

Belongs to the dihydroorotate dehydrogenase family. Type 1 subfamily. As to quaternary structure, heterotetramer of 2 PyrK and 2 PyrD type B subunits. FMN serves as cofactor.

It is found in the cytoplasm. The catalysed reaction is (S)-dihydroorotate + NAD(+) = orotate + NADH + H(+). It participates in pyrimidine metabolism; UMP biosynthesis via de novo pathway; orotate from (S)-dihydroorotate (NAD(+) route): step 1/1. Its function is as follows. Catalyzes the conversion of dihydroorotate to orotate with NAD(+) as electron acceptor. The chain is Dihydroorotate dehydrogenase B (NAD(+)), catalytic subunit (pyrD) from Bacillus cereus (strain ATCC 14579 / DSM 31 / CCUG 7414 / JCM 2152 / NBRC 15305 / NCIMB 9373 / NCTC 2599 / NRRL B-3711).